The following is a 269-amino-acid chain: 5'-nucleotidase SurE (269 aa).

A divalent metal cation-binding residues include Asp-11, Asp-12, Ser-42, and Asn-90.

The protein belongs to the SurE nucleotidase family. The cofactor is a divalent metal cation.

It localises to the cytoplasm. It catalyses the reaction a ribonucleoside 5'-phosphate + H2O = a ribonucleoside + phosphate. Nucleotidase that shows phosphatase activity on nucleoside 5'-monophosphates. The polypeptide is 5'-nucleotidase SurE (Haloarcula marismortui (strain ATCC 43049 / DSM 3752 / JCM 8966 / VKM B-1809) (Halobacterium marismortui)).